The following is a 169-amino-acid chain: Small ribosomal subunit protein uS5 (169 aa).

The S5 DRBM domain occupies 14–77; it reads LDDQVVAINR…AAAEKNLITV (64 aa).

It belongs to the universal ribosomal protein uS5 family. As to quaternary structure, part of the 30S ribosomal subunit. Contacts proteins S4 and S8.

In terms of biological role, with S4 and S12 plays an important role in translational accuracy. Functionally, located at the back of the 30S subunit body where it stabilizes the conformation of the head with respect to the body. The polypeptide is Small ribosomal subunit protein uS5 (Limosilactobacillus reuteri (strain DSM 20016) (Lactobacillus reuteri)).